The sequence spans 346 residues: Methylthioribose-1-phosphate isomerase (346 aa).

Substrate is bound by residues 46-48 (RGA), Arg-89, and Gln-196. The Proton donor role is filled by Asp-237. Position 247–248 (247–248 (NK)) interacts with substrate.

This sequence belongs to the eIF-2B alpha/beta/delta subunits family. MtnA subfamily.

The enzyme catalyses 5-(methylsulfanyl)-alpha-D-ribose 1-phosphate = 5-(methylsulfanyl)-D-ribulose 1-phosphate. It participates in amino-acid biosynthesis; L-methionine biosynthesis via salvage pathway; L-methionine from S-methyl-5-thio-alpha-D-ribose 1-phosphate: step 1/6. Its function is as follows. Catalyzes the interconversion of methylthioribose-1-phosphate (MTR-1-P) into methylthioribulose-1-phosphate (MTRu-1-P). The sequence is that of Methylthioribose-1-phosphate isomerase from Geotalea uraniireducens (strain Rf4) (Geobacter uraniireducens).